Consider the following 565-residue polypeptide: Ubiquitin carboxyl-terminal hydrolase 21 (565 aa).

Residues Met1–Glu14 show a composition bias toward basic and acidic residues. Residues Met1–Pro103 are disordered. Residues Met48 to Gly57 show a composition bias toward pro residues. Residues Leu58–Arg70 show a composition bias toward basic and acidic residues. Residues Glu134–Arg152 carry the Nuclear export signal motif. The USP domain occupies Val212 to Met558. The active-site Nucleophile is Cys221. 4 residues coordinate Zn(2+): Cys384, Cys387, Cys437, and Cys440. His518 functions as the Proton acceptor in the catalytic mechanism.

This sequence belongs to the peptidase C19 family. USP21 subfamily. In terms of assembly, interacts with BEND3. As to expression, highly expressed in heart, pancreas and skeletal muscle. Also expressed in brain, placenta, liver and kidney, and at very low level in lung.

It is found in the cytoplasm. Its subcellular location is the nucleus. It catalyses the reaction Thiol-dependent hydrolysis of ester, thioester, amide, peptide and isopeptide bonds formed by the C-terminal Gly of ubiquitin (a 76-residue protein attached to proteins as an intracellular targeting signal).. Functionally, deubiquitinates histone H2A, a specific tag for epigenetic transcriptional repression, thereby acting as a coactivator. Deubiquitination of histone H2A releaves the repression of di- and trimethylation of histone H3 at 'Lys-4', resulting in regulation of transcriptional initiation. Regulates gene expression via histone H2A deubiquitination. Deubiquitinates BAZ2A/TIP5 leading to its stabilization. Also capable of removing NEDD8 from NEDD8 conjugates but has no effect on Sentrin-1 conjugates. Also acts as a negative regulator of the ribosome quality control (RQC) by mediating deubiquitination of 40S ribosomal proteins RPS10/eS10 and RPS20/uS10, thereby antagonizing ZNF598-mediated 40S ubiquitination. The protein is Ubiquitin carboxyl-terminal hydrolase 21 of Homo sapiens (Human).